The following is a 135-amino-acid chain: Aspartate 1-decarboxylase (135 aa).

The active-site Schiff-base intermediate with substrate; via pyruvic acid is the serine 25. Serine 25 bears the Pyruvic acid (Ser) mark. Threonine 57 contacts substrate. Tyrosine 58 acts as the Proton donor in catalysis. Residue 73–75 (GAA) coordinates substrate.

Belongs to the PanD family. Heterooctamer of four alpha and four beta subunits. Pyruvate is required as a cofactor. Is synthesized initially as an inactive proenzyme, which is activated by self-cleavage at a specific serine bond to produce a beta-subunit with a hydroxyl group at its C-terminus and an alpha-subunit with a pyruvoyl group at its N-terminus.

It localises to the cytoplasm. It catalyses the reaction L-aspartate + H(+) = beta-alanine + CO2. Its pathway is cofactor biosynthesis; (R)-pantothenate biosynthesis; beta-alanine from L-aspartate: step 1/1. Its function is as follows. Catalyzes the pyruvoyl-dependent decarboxylation of aspartate to produce beta-alanine. The chain is Aspartate 1-decarboxylase from Mycolicibacterium vanbaalenii (strain DSM 7251 / JCM 13017 / BCRC 16820 / KCTC 9966 / NRRL B-24157 / PYR-1) (Mycobacterium vanbaalenii).